A 64-amino-acid chain; its full sequence is Large ribosomal subunit protein bL33c (64 aa).

This sequence belongs to the bacterial ribosomal protein bL33 family.

The protein localises to the plastid. Its subcellular location is the cyanelle. The polypeptide is Large ribosomal subunit protein bL33c (rpl33) (Cyanophora paradoxa).